The following is a 134-amino-acid chain: Large-conductance mechanosensitive channel (134 aa).

The next 2 helical transmembrane spans lie at 16 to 36 and 81 to 101; these read VIDLAVAVVIGAAFGKIVTAL and GDFINTILQFIIIAFAIFIIV.

The protein belongs to the MscL family. In terms of assembly, homopentamer.

The protein localises to the cell inner membrane. Functionally, channel that opens in response to stretch forces in the membrane lipid bilayer. May participate in the regulation of osmotic pressure changes within the cell. This is Large-conductance mechanosensitive channel from Xylella fastidiosa (strain Temecula1 / ATCC 700964).